We begin with the raw amino-acid sequence, 491 residues long: Probable glycine dehydrogenase (decarboxylating) subunit 2 (491 aa).

N6-(pyridoxal phosphate)lysine is present on Lys273.

Belongs to the GcvP family. C-terminal subunit subfamily. The glycine cleavage system is composed of four proteins: P, T, L and H. In this organism, the P 'protein' is a heterodimer of two subunits. It depends on pyridoxal 5'-phosphate as a cofactor.

It catalyses the reaction N(6)-[(R)-lipoyl]-L-lysyl-[glycine-cleavage complex H protein] + glycine + H(+) = N(6)-[(R)-S(8)-aminomethyldihydrolipoyl]-L-lysyl-[glycine-cleavage complex H protein] + CO2. Its function is as follows. The glycine cleavage system catalyzes the degradation of glycine. The P protein binds the alpha-amino group of glycine through its pyridoxal phosphate cofactor; CO(2) is released and the remaining methylamine moiety is then transferred to the lipoamide cofactor of the H protein. The sequence is that of Probable glycine dehydrogenase (decarboxylating) subunit 2 from Bacillus cereus (strain AH187).